The sequence spans 252 residues: Urease accessory protein UreD (252 aa).

It belongs to the UreD family. UreD, UreF and UreG form a complex that acts as a GTP-hydrolysis-dependent molecular chaperone, activating the urease apoprotein by helping to assemble the nickel containing metallocenter of UreC. The UreE protein probably delivers the nickel.

The protein resides in the cytoplasm. Functionally, required for maturation of urease via the functional incorporation of the urease nickel metallocenter. In Streptomyces avermitilis (strain ATCC 31267 / DSM 46492 / JCM 5070 / NBRC 14893 / NCIMB 12804 / NRRL 8165 / MA-4680), this protein is Urease accessory protein UreD.